The chain runs to 283 residues: Pantothenate synthetase (283 aa).

ATP is bound at residue 30–37 (MGYLHDGH). His37 acts as the Proton donor in catalysis. (R)-pantoate is bound at residue Gln61. A beta-alanine-binding site is contributed by Gln61. Residue 148 to 151 (GQKD) participates in ATP binding. Gln154 is a binding site for (R)-pantoate. Position 185–188 (185–188 (MSSR)) interacts with ATP.

This sequence belongs to the pantothenate synthetase family. In terms of assembly, homodimer.

It is found in the cytoplasm. The catalysed reaction is (R)-pantoate + beta-alanine + ATP = (R)-pantothenate + AMP + diphosphate + H(+). It participates in cofactor biosynthesis; (R)-pantothenate biosynthesis; (R)-pantothenate from (R)-pantoate and beta-alanine: step 1/1. Its function is as follows. Catalyzes the condensation of pantoate with beta-alanine in an ATP-dependent reaction via a pantoyl-adenylate intermediate. The sequence is that of Pantothenate synthetase from Carboxydothermus hydrogenoformans (strain ATCC BAA-161 / DSM 6008 / Z-2901).